The chain runs to 560 residues: Hydroxyisourate hydrolase (560 aa).

An N-terminal signal peptide occupies residues 1 to 31 (MMEPPQTRLMINVFIVSFLALLVNLVVGVLG). Residues 32–517 (ADNYSRDDFP…LEQDPITCSK (486 aa)) are Peroxisomal-facing. A glycan (N-linked (GlcNAc...) asparagine) is linked at asparagine 34. A beta-D-glucoside contacts are provided by residues glutamine 54 and 198-199 (NE). The active-site Proton donor is glutamate 199. A disulfide bond links cysteine 218 and cysteine 223. 2 N-linked (GlcNAc...) asparagine glycosylation sites follow: asparagine 226 and asparagine 231. An a beta-D-glucoside-binding site is contributed by tyrosine 343. A glycan (N-linked (GlcNAc...) asparagine) is linked at asparagine 347. Glutamate 408 contacts a beta-D-glucoside. Glutamate 408 serves as the catalytic Nucleophile. Asparagine 416 carries an N-linked (GlcNAc...) asparagine glycan. Phenylalanine 467 provides a ligand contact to a beta-D-glucoside. Asparagine 489 is a glycosylation site (N-linked (GlcNAc...) asparagine). The helical transmembrane segment at 518-538 (SPIIFSKISKWVLASLLFLIQ) threads the bilayer. Over 539 to 560 (HKIKFMWREPLPGQIPLKLVMF) the chain is Cytoplasmic.

It belongs to the glycosyl hydrolase 1 family. As to quaternary structure, monomer. Highly expressed in uninfected root nodules. Detected in leaves, stems and roots.

Its subcellular location is the peroxisome membrane. The enzyme catalyses 5-hydroxyisourate + H2O = 5-hydroxy-2-oxo-4-ureido-2,5-dihydro-1H-imidazole-5-carboxylate + H(+). The protein operates within purine metabolism; urate degradation; (S)-allantoin from urate: step 2/3. Its function is as follows. Involved in the conversion of hydroxyisourate to ureides such as allantoin, the major form of nitrogen transport in legumes. In Glycine max (Soybean), this protein is Hydroxyisourate hydrolase (HIUH).